We begin with the raw amino-acid sequence, 308 residues long: MSRGPWHVAVLMGGWSAEREVSLMSGKGVADALESRGHKVTRIDMDRDVALRLAEAKPDVVFNALHGVPGEDGTVQGMLDLMGFRYTHSGLVTSVIAIDKELTKQALVPHGIPMPTGTMVDSESLFSVDPLPRPYVLKPVNEGSSVGVAIVRDDSNYGNPISRDALGPWQQFDRLLAEPFIKGRELTVAVLGDTALAVTELRVKSGFYDYDAKYTDGLTEHVCPADVPDDVAQRMKDLALQAHRLLGCKGASRSDFRWDDEHGLAGIFLLEVNTQPGMTPLSLVPEQARAVGMDYAELVERIVEEALT.

Residues 104 to 304 (KQALVPHGIP…YAELVERIVE (201 aa)) form the ATP-grasp domain. 131–187 (LPRPYVLKPVNEGSSVGVAIVRDDSNYGNPISRDALGPWQQFDRLLAEPFIKGRELT) contributes to the ATP binding site. Mg(2+) is bound by residues Asp-255, Glu-271, and Asn-273.

Belongs to the D-alanine--D-alanine ligase family. The cofactor is Mg(2+). Requires Mn(2+) as cofactor.

It is found in the cytoplasm. The enzyme catalyses 2 D-alanine + ATP = D-alanyl-D-alanine + ADP + phosphate + H(+). The protein operates within cell wall biogenesis; peptidoglycan biosynthesis. Functionally, cell wall formation. The protein is D-alanine--D-alanine ligase of Sphingopyxis alaskensis (strain DSM 13593 / LMG 18877 / RB2256) (Sphingomonas alaskensis).